Here is a 556-residue protein sequence, read N- to C-terminus: Formate--tetrahydrofolate ligase (556 aa).

65–72 (TPAGEGKS) is an ATP binding site.

It belongs to the formate--tetrahydrofolate ligase family.

It carries out the reaction (6S)-5,6,7,8-tetrahydrofolate + formate + ATP = (6R)-10-formyltetrahydrofolate + ADP + phosphate. The protein operates within one-carbon metabolism; tetrahydrofolate interconversion. This is Formate--tetrahydrofolate ligase from Clostridium perfringens (strain SM101 / Type A).